Consider the following 166-residue polypeptide: Interleukin-2 (166 aa).

The first 20 residues, 1-20, serve as a signal peptide directing secretion; it reads MYSMQLASCVTLTLVLLVNS. T23 is a glycosylation site (O-linked (GalNAc...) threonine). C89 and C137 form a disulfide bridge.

It belongs to the IL-2 family.

The protein localises to the secreted. Cytokine produced by activated CD4-positive helper T-cells and to a lesser extend activated CD8-positive T-cells and natural killer (NK) cells that plays pivotal roles in the immune response and tolerance. Binds to a receptor complex composed of either the high-affinity trimeric IL-2R (IL2RA/CD25, IL2RB/CD122 and IL2RG/CD132) or the low-affinity dimeric IL-2R (IL2RB and IL2RG). Interaction with the receptor leads to oligomerization and conformation changes in the IL-2R subunits resulting in downstream signaling starting with phosphorylation of JAK1 and JAK3. In turn, JAK1 and JAK3 phosphorylate the receptor to form a docking site leading to the phosphorylation of several substrates including STAT5. This process leads to activation of several pathways including STAT, phosphoinositide-3-kinase/PI3K and mitogen-activated protein kinase/MAPK pathways. Functions as a T-cell growth factor and can increase NK-cell cytolytic activity as well. Promotes strong proliferation of activated B-cells and subsequently immunoglobulin production. Plays a pivotal role in regulating the adaptive immune system by controlling the survival and proliferation of regulatory T-cells, which are required for the maintenance of immune tolerance. Moreover, participates in the differentiation and homeostasis of effector T-cell subsets, including Th1, Th2, Th17 as well as memory CD8-positive T-cells. The protein is Interleukin-2 (Il2) of Mus spretus (Western Mediterranean mouse).